Consider the following 84-residue polypeptide: Small ribosomal subunit protein uS17 (84 aa).

It belongs to the universal ribosomal protein uS17 family. Part of the 30S ribosomal subunit.

In terms of biological role, one of the primary rRNA binding proteins, it binds specifically to the 5'-end of 16S ribosomal RNA. This chain is Small ribosomal subunit protein uS17, found in Treponema pallidum (strain Nichols).